The chain runs to 635 residues: Sodium- and chloride-dependent creatine transporter 1 (635 aa).

Residues 1–28 (MAKKSAENGIYSVSGDEKKGPLIAPGPD) form a disordered region. At 1-60 (MAKKSAENGIYSVSGDEKKGPLIAPGPDGAPAKGDGPVGLGTPGGRLAVPPRETWTRQMD) the chain is on the cytoplasmic side. At threonine 42 the chain carries Phosphothreonine. Residues 61-81 (FIMSCVGFAVGLGNVWRFPYL) form a helical membrane-spanning segment. Residues 82–87 (CYKNGG) lie on the Extracellular side of the membrane. A helical transmembrane segment spans residues 88 to 108 (GVFLIPYVLIALVGGIPIFFL). Residues 109-138 (EISLGQFMKAGSINVWNICPLFKGLGYASM) are Cytoplasmic-facing. Residues 139–159 (VIVFYCNTYYIMVLAWGFYYL) form a helical membrane-spanning segment. The Extracellular portion of the chain corresponds to 160-230 (VKSFTTTLPW…LSGGLEVPGA (71 aa)). N-linked (GlcNAc...) asparagine glycans are attached at residues asparagine 192 and asparagine 197. The helical transmembrane segment at 231-251 (LNWEVTLCLLACWVLVYFCVW) threads the bilayer. Over 252–269 (KGVKSTGKIVYFTATFPY) the chain is Cytoplasmic. Residues 270 to 290 (VVLVVLLVRGVLLPGALDGII) form a helical membrane-spanning segment. Over 291 to 304 (YYLKPDWSKLGSPQ) the chain is Extracellular. The helical transmembrane segment at 305–325 (VWIDAGTQIFFSYAIGLGALT) threads the bilayer. Residues 326-341 (ALGSYNRFNNNCYKDA) are Cytoplasmic-facing. Residues 342–362 (IILALINSGTSFFAGFVVFSI) form a helical membrane-spanning segment. The Extracellular segment spans residues 363 to 394 (LGFMAAEQGVHISKVAESGPGLAFIAYPRAVT). A helical transmembrane segment spans residues 395 to 415 (LMPVAPLWAALFFFMLLLLGL). Residues 416-444 (DSQFVGVEGFITGLLDLLPASYYFRFQRE) lie on the Cytoplasmic side of the membrane. Residues 445–465 (ISVALCCALCFVIDLSMVTDG) form a helical membrane-spanning segment. Topologically, residues 466 to 479 (GMYVFQLFDYYSAS) are extracellular. The helical transmembrane segment at 480–500 (GTTLLWQAFWECVVVAWVYGA) threads the bilayer. Over 501–520 (DRFMDDIACMIGYRPCPWMK) the chain is Cytoplasmic. Residues 521 to 541 (WCWSFFTPLVCMGIFIFNVVY) traverse the membrane as a helical segment. The Extracellular segment spans residues 542 to 560 (YEPLVYNNTYVYPWWGEAM). Asparagine 548 carries an N-linked (GlcNAc...) asparagine glycan. A helical membrane pass occupies residues 561–581 (GWAFALSSMLCVPLHLLGCLL). Over 582–635 (RAKGTMAERWQHLTQPIWGLHHLEYRAQDADVRGLTTLTPVSESSKVVVVESVM) the chain is Cytoplasmic. Residues threonine 617 and threonine 620 each carry the phosphothreonine modification. Serine 623 is modified (phosphoserine).

This sequence belongs to the sodium:neurotransmitter symporter (SNF) (TC 2.A.22) family. SLC6A8 subfamily. In terms of processing, glycosylated. In terms of tissue distribution, predominantly expressed in skeletal muscle and kidney. Also found in brain, heart, colon, testis and prostate.

It is found in the cell membrane. It localises to the apical cell membrane. The catalysed reaction is creatine(out) + chloride(out) + 2 Na(+)(out) = creatine(in) + chloride(in) + 2 Na(+)(in). In terms of biological role, creatine:sodium symporter which mediates the uptake of creatine. Plays an important role in supplying creatine to the brain via the blood-brain barrier. The chain is Sodium- and chloride-dependent creatine transporter 1 (SLC6A8) from Homo sapiens (Human).